We begin with the raw amino-acid sequence, 550 residues long: Dihydroxy-acid dehydratase (550 aa).

Position 78 (Asp-78) interacts with Mg(2+). [2Fe-2S] cluster is bound at residue Cys-119. Asp-120 and Lys-121 together coordinate Mg(2+). Residue Lys-121 is modified to N6-carboxylysine. Cys-191 is a binding site for [2Fe-2S] cluster. Glu-440 lines the Mg(2+) pocket. Ser-466 (proton acceptor) is an active-site residue.

Belongs to the IlvD/Edd family. In terms of assembly, homodimer. The cofactor is [2Fe-2S] cluster. Mg(2+) serves as cofactor.

The catalysed reaction is (2R)-2,3-dihydroxy-3-methylbutanoate = 3-methyl-2-oxobutanoate + H2O. It catalyses the reaction (2R,3R)-2,3-dihydroxy-3-methylpentanoate = (S)-3-methyl-2-oxopentanoate + H2O. The protein operates within amino-acid biosynthesis; L-isoleucine biosynthesis; L-isoleucine from 2-oxobutanoate: step 3/4. It functions in the pathway amino-acid biosynthesis; L-valine biosynthesis; L-valine from pyruvate: step 3/4. Functionally, functions in the biosynthesis of branched-chain amino acids. Catalyzes the dehydration of (2R,3R)-2,3-dihydroxy-3-methylpentanoate (2,3-dihydroxy-3-methylvalerate) into 2-oxo-3-methylpentanoate (2-oxo-3-methylvalerate) and of (2R)-2,3-dihydroxy-3-methylbutanoate (2,3-dihydroxyisovalerate) into 2-oxo-3-methylbutanoate (2-oxoisovalerate), the penultimate precursor to L-isoleucine and L-valine, respectively. The chain is Dihydroxy-acid dehydratase from Methanococcus maripaludis (strain C5 / ATCC BAA-1333).